A 702-amino-acid chain; its full sequence is MAEDTDGGIRFNSLCFINDHVGFQGSIKTSPSDFIVIEIDEQGQLVSKATDGSLYEISKIQSEPSNSVKKPKLNIQNVSLEHKNSEGAADLPGCSDGDRSHQSDSEKENSVNSVTSKCEEESVDLLRSLLDEKTHTSLGQFACDIKRMWNSQTELTEPSPELSLGKILDKNRRAVLHSAVRQAFPFLITVGNQGEVVVKPNRECKELCRLVSEEEALGFFKYLDAKKENSKFTFKPDPNKDHRKAVHHFLNKKFGNLVETKSFPGQHHSAGNPDSAITVRFREKARGKRSHPEGCERGKAVYTAFTLQKENLETFEAIGLLAVKLGVIPSDFSYAGLKDKRAITYQSMVVKKVTPERLKSIKEEIEKKRMNVFNIRSVGDCLRLGQLKGNHFEIIIRHLRNQLNDSANLTERILEAIENVKNKGFVNYYGPQRFGKGQKIQTDQIGLALLKNEMVKAIKLFLTPEDVDDPVNKAKQYFLRTEDAKGTLSLMPEFRVRERALLESLHRFGVTEEGCVRAWFSFPHSMRIFYIHAYSSRIWNEAASYRLAAYGPKVVEGDLICSDEDADKHFPSSKVHLVTKEEESAHTYALHQVVLPVLGYNVQYPENQVGRWYQEALSRDGLQACRFRVPALKLNVPGCYRHIVKHPRNVSHRLVHPDPATEEARVEGPHSDDTASSLSLSFDLDASCYATVCLREMMKGDI.

S79 is modified (phosphoserine). Residues 84–116 form a disordered region; sequence NSEGAADLPGCSDGDRSHQSDSEKENSVNSVTS. The span at 96 to 109 shows a compositional bias: basic and acidic residues; sequence DGDRSHQSDSEKEN. D339 (nucleophile) is an active-site residue. The 223-residue stretch at 424–646 folds into the TRUD domain; it reads GFVNYYGPQR…PGCYRHIVKH (223 aa).

It belongs to the pseudouridine synthase TruD family.

The enzyme catalyses a uridine in mRNA = a pseudouridine in mRNA. Functionally, pseudouridine synthase that catalyzes pseudouridylation of mRNAs. In Mus musculus (Mouse), this protein is Pseudouridylate synthase PUS7L.